The primary structure comprises 367 residues: 4-hydroxy-3-methylbut-2-en-1-yl diphosphate synthase (flavodoxin) (367 aa).

Residues Cys265, Cys268, Cys300, and Glu307 each coordinate [4Fe-4S] cluster.

Belongs to the IspG family. [4Fe-4S] cluster serves as cofactor.

The enzyme catalyses (2E)-4-hydroxy-3-methylbut-2-enyl diphosphate + oxidized [flavodoxin] + H2O + 2 H(+) = 2-C-methyl-D-erythritol 2,4-cyclic diphosphate + reduced [flavodoxin]. It participates in isoprenoid biosynthesis; isopentenyl diphosphate biosynthesis via DXP pathway; isopentenyl diphosphate from 1-deoxy-D-xylulose 5-phosphate: step 5/6. Converts 2C-methyl-D-erythritol 2,4-cyclodiphosphate (ME-2,4cPP) into 1-hydroxy-2-methyl-2-(E)-butenyl 4-diphosphate. The chain is 4-hydroxy-3-methylbut-2-en-1-yl diphosphate synthase (flavodoxin) from Bacillus cereus (strain ATCC 10987 / NRS 248).